We begin with the raw amino-acid sequence, 401 residues long: 8-amino-7-oxononanoate synthase (401 aa).

Position 24 (arginine 24) interacts with substrate. 111 to 112 (GF) contacts pyridoxal 5'-phosphate. Position 137 (histidine 137) interacts with substrate. Residues serine 183, histidine 211, and threonine 240 each contribute to the pyridoxal 5'-phosphate site. N6-(pyridoxal phosphate)lysine is present on lysine 243. Threonine 357 lines the substrate pocket.

Belongs to the class-II pyridoxal-phosphate-dependent aminotransferase family. BioF subfamily. In terms of assembly, homodimer. The cofactor is pyridoxal 5'-phosphate.

It carries out the reaction 6-carboxyhexanoyl-[ACP] + L-alanine + H(+) = (8S)-8-amino-7-oxononanoate + holo-[ACP] + CO2. It participates in cofactor biosynthesis; biotin biosynthesis. In terms of biological role, catalyzes the decarboxylative condensation of pimeloyl-[acyl-carrier protein] and L-alanine to produce 8-amino-7-oxononanoate (AON), [acyl-carrier protein], and carbon dioxide. This Xanthomonas euvesicatoria pv. vesicatoria (strain 85-10) (Xanthomonas campestris pv. vesicatoria) protein is 8-amino-7-oxononanoate synthase.